The following is a 325-amino-acid chain: Transaldolase (325 aa).

Lys-125 serves as the catalytic Schiff-base intermediate with substrate.

It belongs to the transaldolase family. Type 2 subfamily.

It localises to the cytoplasm. The enzyme catalyses D-sedoheptulose 7-phosphate + D-glyceraldehyde 3-phosphate = D-erythrose 4-phosphate + beta-D-fructose 6-phosphate. It functions in the pathway carbohydrate degradation; pentose phosphate pathway; D-glyceraldehyde 3-phosphate and beta-D-fructose 6-phosphate from D-ribose 5-phosphate and D-xylulose 5-phosphate (non-oxidative stage): step 2/3. Its function is as follows. Transaldolase is important for the balance of metabolites in the pentose-phosphate pathway. This chain is Transaldolase, found in Campylobacter jejuni subsp. jejuni serotype O:23/36 (strain 81-176).